The sequence spans 398 residues: G2/mitotic-specific cyclin-B2 (398 aa).

2 disordered regions span residues 1–26 (MALL…KPKS) and 53–76 (AQNT…KPTA). Phosphothreonine is present on T8. The segment covering 8–23 (TVSTDLENNDTGVNSK) has biased composition (polar residues). Low complexity predominate over residues 55-69 (NTKVPVPPTKTTNVN). Residues S77 and S92 each carry the phosphoserine modification. The residue at position 94 (T94) is a Phosphothreonine. Phosphoserine occurs at positions 99, 392, and 398.

The protein belongs to the cyclin family. Cyclin AB subfamily. In terms of assembly, interacts with the CDK1 protein kinase to form a serine/threonine kinase holoenzyme complex also known as maturation promoting factor (MPF). The cyclin subunit imparts substrate specificity to the complex.

Its function is as follows. Essential for the control of the cell cycle at the G2/M (mitosis) transition. This chain is G2/mitotic-specific cyclin-B2 (CCNB2), found in Bos taurus (Bovine).